We begin with the raw amino-acid sequence, 440 residues long: tRNA modification GTPase MnmE (440 aa).

(6S)-5-formyl-5,6,7,8-tetrahydrofolate contacts are provided by arginine 34, glutamate 94, and arginine 134. The TrmE-type G domain maps to 229-367 (GVRVVLAGPP…LVALLLDRAA (139 aa)). Asparagine 239 contacts K(+). Residues 239-244 (NAGKST), 258-264 (TPIAGTT), 283-286 (DTAG), and 348-350 (SAR) contribute to the GTP site. Position 243 (serine 243) interacts with Mg(2+). K(+)-binding residues include threonine 258, isoleucine 260, and threonine 263. Residue threonine 264 participates in Mg(2+) binding. Lysine 440 serves as a coordination point for (6S)-5-formyl-5,6,7,8-tetrahydrofolate.

This sequence belongs to the TRAFAC class TrmE-Era-EngA-EngB-Septin-like GTPase superfamily. TrmE GTPase family. In terms of assembly, homodimer. Heterotetramer of two MnmE and two MnmG subunits. Requires K(+) as cofactor.

Its subcellular location is the cytoplasm. Functionally, exhibits a very high intrinsic GTPase hydrolysis rate. Involved in the addition of a carboxymethylaminomethyl (cmnm) group at the wobble position (U34) of certain tRNAs, forming tRNA-cmnm(5)s(2)U34. The protein is tRNA modification GTPase MnmE of Rhizorhabdus wittichii (strain DSM 6014 / CCUG 31198 / JCM 15750 / NBRC 105917 / EY 4224 / RW1) (Sphingomonas wittichii).